We begin with the raw amino-acid sequence, 97 residues long: Mapk-regulated corepressor-interacting protein 1 (97 aa).

The segment at 1–30 (MTSSPVSRVVYNGKRTSSPRSPPSSSEIFT) is disordered. A phosphoserine mark is found at Ser21 and Ser24. Thr30 is modified (phosphothreonine). Tyr41 carries the post-translational modification Phosphotyrosine. The residue at position 79 (Lys79) is an N6-acetyllysine. The PXDLS motif signature appears at 80–84 (PIDLS).

The protein belongs to the MCRIP family. As to quaternary structure, interacts (unphosphorylated form, via the PXDLS motif) with CTBP1, competitively inhibiting CTBP-ZEB1 interaction. Interacts with CTBP2. Interacts with MCRIP2. Interacts with DDX6. In terms of processing, phosphorylation by MAPK3/1 (ERK1/2) regulates MCRIP1 binding to CTBP(s).

It localises to the nucleus. Its subcellular location is the cytoplasm. The protein localises to the stress granule. Functionally, the phosphorylation status of MCRIP1 functions as a molecular switch to regulate epithelial-mesenchymal transition. Unphosphorylated MCRIP1 binds to and inhibits the transcriptional corepressor CTBP(s). When phosphorylated by MAPK/ERK, MCRIP1 releases CTBP(s) resulting in transcriptional silencing of the E-cadherin gene and induction of epithelial-mesenchymal transition. The protein is Mapk-regulated corepressor-interacting protein 1 of Homo sapiens (Human).